The chain runs to 100 residues: Large ribosomal subunit protein bL21 (100 aa).

This sequence belongs to the bacterial ribosomal protein bL21 family. As to quaternary structure, part of the 50S ribosomal subunit. Contacts protein L20.

In terms of biological role, this protein binds to 23S rRNA in the presence of protein L20. This is Large ribosomal subunit protein bL21 from Mycoplasma mycoides subsp. mycoides SC (strain CCUG 32753 / NCTC 10114 / PG1).